The chain runs to 485 residues: Phosphoglucosamine mutase (485 aa).

The active-site Phosphoserine intermediate is Ser-133. The Mg(2+) site is built by Ser-133, Asp-274, Asp-276, and Asp-278. Ser-133 carries the phosphoserine modification.

This sequence belongs to the phosphohexose mutase family. Requires Mg(2+) as cofactor. Activated by phosphorylation.

It catalyses the reaction alpha-D-glucosamine 1-phosphate = D-glucosamine 6-phosphate. Catalyzes the conversion of glucosamine-6-phosphate to glucosamine-1-phosphate. The protein is Phosphoglucosamine mutase of Rippkaea orientalis (strain PCC 8801 / RF-1) (Cyanothece sp. (strain PCC 8801)).